A 21-amino-acid polypeptide reads, in one-letter code: Peptide PGLa-R2 (21 aa).

Position 21 is a leucine amide (Leu-21).

Expressed by the skin glands.

The protein resides in the secreted. Its function is as follows. Antimicrobial peptide. In Xenopus ruwenzoriensis (Uganda clawed frog), this protein is Peptide PGLa-R2.